We begin with the raw amino-acid sequence, 277 residues long: Ethanolamine ammonia-lyase small subunit (277 aa).

Adenosylcob(III)alamin contacts are provided by Val-164, Glu-185, and Cys-214.

Belongs to the EutC family. As to quaternary structure, the basic unit is a heterodimer which dimerizes to form tetramers. The heterotetramers trimerize; 6 large subunits form a core ring with 6 small subunits projecting outwards. Adenosylcob(III)alamin is required as a cofactor.

It is found in the bacterial microcompartment. The enzyme catalyses ethanolamine = acetaldehyde + NH4(+). It participates in amine and polyamine degradation; ethanolamine degradation. In terms of biological role, catalyzes the deamination of various vicinal amino-alcohols to oxo compounds. Allows this organism to utilize ethanolamine as the sole source of nitrogen and carbon in the presence of external vitamin B12. The sequence is that of Ethanolamine ammonia-lyase small subunit from Pseudomonas fluorescens (strain SBW25).